Consider the following 156-residue polypeptide: V-type sodium ATPase subunit K (156 aa).

4 consecutive transmembrane segments (helical) span residues 11 to 31, 60 to 80, 89 to 109, and 132 to 152; these read GMVF…IGSA, LLPG…FINL, GLNF…SGIA, and IIFA…SFLL.

It belongs to the V-ATPase proteolipid subunit family. In terms of processing, the N-terminus is blocked.

It localises to the cell membrane. Involved in ATP-driven sodium extrusion. This chain is V-type sodium ATPase subunit K (ntpK), found in Enterococcus hirae (strain ATCC 9790 / DSM 20160 / JCM 8729 / LMG 6399 / NBRC 3181 / NCIMB 6459 / NCDO 1258 / NCTC 12367 / WDCM 00089 / R).